The sequence spans 139 residues: Endoribonuclease YbeY (139 aa).

Zn(2+) contacts are provided by His-110, His-114, and His-120.

The protein belongs to the endoribonuclease YbeY family. Zn(2+) is required as a cofactor.

It localises to the cytoplasm. Single strand-specific metallo-endoribonuclease involved in late-stage 70S ribosome quality control and in maturation of the 3' terminus of the 16S rRNA. This is Endoribonuclease YbeY from Thermus thermophilus (strain ATCC BAA-163 / DSM 7039 / HB27).